The primary structure comprises 446 residues: N-succinylarginine dihydrolase (446 aa).

Substrate is bound by residues 19–28, Asn-110, and 137–138; these read SGLSYGNVAS and HR. Residue Glu-174 is part of the active site. Residue Arg-214 participates in substrate binding. His-250 is a catalytic residue. Substrate-binding residues include Asp-252 and Asn-363. Cys-369 acts as the Nucleophile in catalysis.

This sequence belongs to the succinylarginine dihydrolase family. In terms of assembly, homodimer.

It catalyses the reaction N(2)-succinyl-L-arginine + 2 H2O + 2 H(+) = N(2)-succinyl-L-ornithine + 2 NH4(+) + CO2. Its pathway is amino-acid degradation; L-arginine degradation via AST pathway; L-glutamate and succinate from L-arginine: step 2/5. Catalyzes the hydrolysis of N(2)-succinylarginine into N(2)-succinylornithine, ammonia and CO(2). This is N-succinylarginine dihydrolase from Hahella chejuensis (strain KCTC 2396).